The following is a 1279-amino-acid chain: Sterol regulatory element-binding protein cleavage-activating protein (1279 aa).

The Cytoplasmic segment spans residues 1-18 (MTLTERLREKISRAFYNH). The helical transmembrane segment at 19-39 (GLLCASYPIPIILFTGFCILA) threads the bilayer. At 40–279 (CCYPLLKLPL…SLVHVHFKEE (240 aa)) the chain is on the lumenal side. The loop-1 stretch occupies residues 46–284 (KLPLPGTGPV…HFKEEIGVAE (239 aa)). Residues 60-80 (PVKDYSPPPVDSDRKQGEPTE) form a disordered region. N-linked (GlcNAc...) asparagine glycosylation is present at N263. The helical transmembrane segment at 280–300 (IGVAELIPLVTTYIILFAYIY) threads the bilayer. The region spanning 284-442 (ELIPLVTTYI…MLFFTTVLSI (159 aa)) is the SSD domain. Topologically, residues 301-312 (FSTRKIDMVKSK) are cytoplasmic. Residues 313–333 (WGLALAAVVTVLSSLLMSVGL) traverse the membrane as a helical segment. Residues 334-344 (CTLFGLTPTLN) lie on the Lumenal side of the membrane. Residues 345–365 (GGEIFPYLVVVIGLENVLVLT) traverse the membrane as a helical segment. At 366-401 (KSVVSTPVDLEVKLRIAQGLSSESWSIMKNMATELG) the chain is on the cytoplasmic side. A helical transmembrane segment spans residues 402 to 422 (IILIGYFTLVPAIQEFCLFAV). Position 423 (V423) is a topological domain, lumenal. A helical membrane pass occupies residues 424-444 (GLVSDFFLQMLFFTTVLSIDI). The Cytoplasmic portion of the chain corresponds to 445 to 518 (RRMELADLNK…FLARTRLAQR (74 aa)). Residues 447-452 (MELADL) carry the ER export signal motif. Glycyl lysine isopeptide (Lys-Gly) (interchain with G-Cter in ubiquitin) cross-links involve residues K454 and K466. The helical transmembrane segment at 519–539 (LIMAGTVVWIGILVYTDPAGL) threads the bilayer. Residues 535–710 (DPAGLRNYLA…QAHGDVTLYK (176 aa)) form a loop-7 region. The Lumenal portion of the chain corresponds to 540–709 (RNYLAAQVTE…VQAHGDVTLY (170 aa)). Residues 579–615 (IFPPDAPKLPENQTSPGESPERGGPAEVVHDSPVPEV) are disordered. 2 N-linked (GlcNAc...) asparagine glycosylation sites follow: N590 and N641. A disordered region spans residues 668 to 696 (EGRHPQDGRSAWPPPGPIPAGHWEAGPKG). The helical transmembrane segment at 710 to 730 (KVAALGLATGIVLVLLLLCLY) threads the bilayer. The Cytoplasmic segment spans residues 731-1279 (RVLCPRNYGQ…YVPSVLEKLD (549 aa)). Residues 731 to 1279 (RVLCPRNYGQ…YVPSVLEKLD (549 aa)) are interaction with SREBF2. One copy of the WD 1 repeat lies at 771–811 (VLRGHLMDIECLASDGMLLVSCCLAGHVCVWDAQTGDCLTR). A disordered region spans residues 811-904 (RIPRPGRQRR…PRHRAVCGRS (94 aa)). Phosphoserine is present on residues S822, S838, and S851. Polar residues predominate over residues 877–891 (IDTNFSAQPRSSQPT). S907 and S937 each carry phosphoserine. The interval 931-962 (PALRPPSPGPVLSQAPEDEGGSPEKGSPSLAW) is disordered. 2 WD repeats span residues 952–1002 (SPEK…LCCS) and 1005–1042 (EVSS…ALSP). At R1051 the chain carries Omega-N-methylarginine. WD repeat units follow at residues 1077-1114 (AHQK…CLFT), 1117-1155 (GHSG…RVSH), 1158-1195 (AHRG…KFYS), and 1197-1235 (QQDL…LLQT).

This sequence belongs to the WD repeat SCAP family. As to quaternary structure, membrane region forms a homotetramer. Component of the SCAP-SREBP complex (composed of SCAP and SREBF1/SREBP1 or SREBF2/SREBP2); interacts with SREBF1/SREBP1 or SREBF2/SREBP2 through its C-terminal cytoplasmic domain. Forms a ternary complex with INSIG1 or INSIG2 through its transmembrane domains at high sterol concentrations. Interacts with PAQR3; the interaction anchors the SCAP-SREBP complex to the Golgi apparatus in low cholesterol conditions. Interacts with the SEC23-SEC24 complex in a SAR1-GTP-dependent manner through an ER export signal in its third cytoplasmic loop. Interacts with RNF139; the interaction inhibits the interaction of SCAP with SEC24B and hampering the ER to Golgi transport of the SCAP-SREBP complex. Interacts with SPRING1. In terms of processing, ubiquitinated at Lys-454 and Lys-466. RNF145 triggers ubiquitination of SCAP, likely inhibiting SCAP-SREBP complex transport to the Golgi apparatus and the subsequent processing/maturation of SREBF2/SREBP2.

It is found in the endoplasmic reticulum membrane. It localises to the golgi apparatus membrane. The protein localises to the cytoplasmic vesicle. Its subcellular location is the COPII-coated vesicle membrane. In terms of biological role, escort protein required for cholesterol as well as lipid homeostasis. Regulates export of the SCAP-SREBP complex from the endoplasmic reticulum to the Golgi upon low cholesterol, thereby regulating the processing of sterol regulatory element-binding proteins (SREBPs) SREBF1/SREBP1 and SREBF2/SREBP2. At high sterol concentrations, formation of a ternary complex with INSIG (INSIG1 or INSIG2) leads to mask the ER export signal in SCAP, promoting retention of the complex in the endoplasmic reticulum. Low sterol concentrations trigger release of INSIG, a conformational change in the SSD domain of SCAP, unmasking of the ER export signal, promoting recruitment into COPII-coated vesicles and transport of the SCAP-SREBP to the Golgi: in the Golgi, SREBPs are then processed, releasing the transcription factor fragment of SREBPs from the membrane, its import into the nucleus and up-regulation of LDLR, INSIG1 and the mevalonate pathway. Binds cholesterol via its SSD domain. This chain is Sterol regulatory element-binding protein cleavage-activating protein, found in Homo sapiens (Human).